We begin with the raw amino-acid sequence, 257 residues long: Hydroxyethylthiazole kinase (257 aa).

Met-49 lines the substrate pocket. Positions 124 and 170 each coordinate ATP. Substrate is bound at residue Gly-197.

The protein belongs to the Thz kinase family. Mg(2+) is required as a cofactor.

It carries out the reaction 5-(2-hydroxyethyl)-4-methylthiazole + ATP = 4-methyl-5-(2-phosphooxyethyl)-thiazole + ADP + H(+). It participates in cofactor biosynthesis; thiamine diphosphate biosynthesis; 4-methyl-5-(2-phosphoethyl)-thiazole from 5-(2-hydroxyethyl)-4-methylthiazole: step 1/1. Functionally, catalyzes the phosphorylation of the hydroxyl group of 4-methyl-5-beta-hydroxyethylthiazole (THZ). This chain is Hydroxyethylthiazole kinase, found in Klebsiella pneumoniae subsp. pneumoniae (strain ATCC 700721 / MGH 78578).